Reading from the N-terminus, the 502-residue chain is ATP synthase subunit alpha (502 aa).

Residue 169–176 (GDRQTGKT) participates in ATP binding.

This sequence belongs to the ATPase alpha/beta chains family. As to quaternary structure, F-type ATPases have 2 components, CF(1) - the catalytic core - and CF(0) - the membrane proton channel. CF(1) has five subunits: alpha(3), beta(3), gamma(1), delta(1), epsilon(1). CF(0) has three main subunits: a(1), b(2) and c(9-12). The alpha and beta chains form an alternating ring which encloses part of the gamma chain. CF(1) is attached to CF(0) by a central stalk formed by the gamma and epsilon chains, while a peripheral stalk is formed by the delta and b chains.

Its subcellular location is the cell membrane. It carries out the reaction ATP + H2O + 4 H(+)(in) = ADP + phosphate + 5 H(+)(out). Functionally, produces ATP from ADP in the presence of a proton gradient across the membrane. The alpha chain is a regulatory subunit. This chain is ATP synthase subunit alpha, found in Clostridium perfringens (strain SM101 / Type A).